The chain runs to 641 residues: Probable ATP-dependent helicase YpvA (641 aa).

Residues 29 to 303 (YDILPEKGFD…EFAELIEDAL (275 aa)) enclose the Helicase ATP-binding domain. 64 to 71 (AGVGTGKT) provides a ligand contact to ATP. [4Fe-4S] cluster contacts are provided by C133, C197, C200, and C206. The DEGH box signature appears at 257–260 (DEGH).

The protein belongs to the helicase family. DinG subfamily. The cofactor is [4Fe-4S] cluster.

It catalyses the reaction Couples ATP hydrolysis with the unwinding of duplex DNA at the replication fork by translocating in the 5'-3' direction. This creates two antiparallel DNA single strands (ssDNA). The leading ssDNA polymer is the template for DNA polymerase III holoenzyme which synthesizes a continuous strand.. The enzyme catalyses ATP + H2O = ADP + phosphate + H(+). In terms of biological role, might be a 5'-3' DNA helicase. This Bacillus subtilis (strain 168) protein is Probable ATP-dependent helicase YpvA (ypvA).